The chain runs to 163 residues: Putative pre-16S rRNA nuclease (163 aa).

This sequence belongs to the YqgF nuclease family.

Its subcellular location is the cytoplasm. Functionally, could be a nuclease involved in processing of the 5'-end of pre-16S rRNA. This chain is Putative pre-16S rRNA nuclease, found in Rhodopseudomonas palustris (strain BisA53).